The sequence spans 419 residues: GTPase Obg (419 aa).

The 158-residue stretch at 2-159 folds into the Obg domain; that stretch reads SAFVDAVTVE…FLAKVELQVL (158 aa). Positions 160-325 constitute an OBG-type G domain; the sequence is ADVGLLGYPN…LKYEIATTLK (166 aa). Residues 166–173, 191–195, 212–215, 279–282, and 306–308 each bind GTP; these read GYPNVGKS, FTTLS, DLPG, NKMD, and SAL. Positions 173 and 193 each coordinate Mg(2+). Residues 341–419 form the OCT domain; that stretch reads LNAEDAVDFI…IFSYEFEYLE (79 aa).

This sequence belongs to the TRAFAC class OBG-HflX-like GTPase superfamily. OBG GTPase family. Monomer. Requires Mg(2+) as cofactor.

It localises to the cytoplasm. An essential GTPase which binds GTP, GDP and possibly (p)ppGpp with moderate affinity, with high nucleotide exchange rates and a fairly low GTP hydrolysis rate. Plays a role in control of the cell cycle, stress response, ribosome biogenesis and in those bacteria that undergo differentiation, in morphogenesis control. The protein is GTPase Obg of Acholeplasma laidlawii (strain PG-8A).